Here is a 99-residue protein sequence, read N- to C-terminus: Transcriptional repressor PagR (99 aa).

In terms of domain architecture, HTH arsR-type spans 9–99 (IEYMSLEDDA…GIIKLLNPIQ (91 aa)). A DNA-binding region (H-T-H motif) is located at residues 43–62 (NVTQIIQILKLPQSTVSQHL).

In terms of biological role, represses the expression of the pagA and atxA genes. This Bacillus anthracis protein is Transcriptional repressor PagR (pagR).